Here is a 72-residue protein sequence, read N- to C-terminus: Translation initiation factor IF-1 (72 aa).

The S1-like domain occupies 1–72; that stretch reads MSKEDMIEFS…SKGRITFRFK (72 aa).

The protein belongs to the IF-1 family. As to quaternary structure, component of the 30S ribosomal translation pre-initiation complex which assembles on the 30S ribosome in the order IF-2 and IF-3, IF-1 and N-formylmethionyl-tRNA(fMet); mRNA recruitment can occur at any time during PIC assembly.

The protein localises to the cytoplasm. In terms of biological role, one of the essential components for the initiation of protein synthesis. Stabilizes the binding of IF-2 and IF-3 on the 30S subunit to which N-formylmethionyl-tRNA(fMet) subsequently binds. Helps modulate mRNA selection, yielding the 30S pre-initiation complex (PIC). Upon addition of the 50S ribosomal subunit IF-1, IF-2 and IF-3 are released leaving the mature 70S translation initiation complex. This Gluconacetobacter diazotrophicus (strain ATCC 49037 / DSM 5601 / CCUG 37298 / CIP 103539 / LMG 7603 / PAl5) protein is Translation initiation factor IF-1.